The primary structure comprises 290 residues: Phosphate import ATP-binding protein PstB (290 aa).

Residues 43-285 (MSVRNLNVYY…PEHELTEAYI (243 aa)) form the ABC transporter domain. Position 75 to 82 (75 to 82 (GPSGCGKS)) interacts with ATP.

It belongs to the ABC transporter superfamily. Phosphate importer (TC 3.A.1.7) family. In terms of assembly, the complex is composed of two ATP-binding proteins (PstB), two transmembrane proteins (PstC and PstA) and a solute-binding protein (PstS).

The protein resides in the cell inner membrane. The catalysed reaction is phosphate(out) + ATP + H2O = ADP + 2 phosphate(in) + H(+). Part of the ABC transporter complex PstSACB involved in phosphate import. Responsible for energy coupling to the transport system. This is Phosphate import ATP-binding protein PstB from Pseudoalteromonas atlantica (strain T6c / ATCC BAA-1087).